The following is a 508-amino-acid chain: ATP synthase subunit alpha, chloroplastic (508 aa).

ATP is bound at residue 173 to 180 (GDRQTGKT).

Belongs to the ATPase alpha/beta chains family. As to quaternary structure, F-type ATPases have 2 components, CF(1) - the catalytic core - and CF(0) - the membrane proton channel. CF(1) has five subunits: alpha(3), beta(3), gamma(1), delta(1), epsilon(1). CF(0) has four main subunits: a, b, b' and c.

The protein localises to the plastid. Its subcellular location is the chloroplast thylakoid membrane. It catalyses the reaction ATP + H2O + 4 H(+)(in) = ADP + phosphate + 5 H(+)(out). In terms of biological role, produces ATP from ADP in the presence of a proton gradient across the membrane. The alpha chain is a regulatory subunit. The protein is ATP synthase subunit alpha, chloroplastic of Chara vulgaris (Common stonewort).